Reading from the N-terminus, the 892-residue chain is Translation initiation factor IF-2 (892 aa).

The interval 65 to 296 (KTRSTLNIPS…KGKRKPSTLQ (232 aa)) is disordered. The segment covering 68-82 (STLNIPSTGGKSKSV) has biased composition (polar residues). Over residues 99 to 217 (EQAKAEEQAQ…KMAAENEGKW (119 aa)) the composition is skewed to basic and acidic residues. Over residues 224 to 237 (QTESADYHVTTSQH) the composition is skewed to polar residues. Residues 239–254 (RAAEDENDAKVEGDRR) are compositionally biased toward basic and acidic residues. Residues 255-269 (SRTRGGKATKQKKGN) show a composition bias toward basic residues. The span at 270–283 (KLSESKADREEARA) shows a compositional bias: basic and acidic residues. Residues 391–560 (HRAPVVTIMG…LLQAEVLELK (170 aa)) enclose the tr-type G domain. Residues 400–407 (GHVDHGKT) are G1. 400–407 (GHVDHGKT) lines the GTP pocket. A G2 region spans residues 425–429 (GITQH). The interval 446–449 (DTPG) is G3. Residues 446–450 (DTPGH) and 500–503 (NKID) contribute to the GTP site. Residues 500–503 (NKID) are G4. The segment at 536–538 (SAK) is G5.

This sequence belongs to the TRAFAC class translation factor GTPase superfamily. Classic translation factor GTPase family. IF-2 subfamily.

The protein resides in the cytoplasm. Functionally, one of the essential components for the initiation of protein synthesis. Protects formylmethionyl-tRNA from spontaneous hydrolysis and promotes its binding to the 30S ribosomal subunits. Also involved in the hydrolysis of GTP during the formation of the 70S ribosomal complex. This chain is Translation initiation factor IF-2, found in Yersinia pseudotuberculosis serotype O:1b (strain IP 31758).